We begin with the raw amino-acid sequence, 904 residues long: E3 ubiquitin-protein ligase HACE1 (904 aa).

ANK repeat units lie at residues 34-63 (AVYT…DVNY), 68-97 (VKRS…NPNY), 101-130 (SGCT…DVNI), 134-163 (EGLT…NVDV), 167-196 (MGQT…DINR), 200-230 (SGAT…YLPD), and 232-261 (NGVT…RLFQ). Residues 569–904 (SNEKLKQGIA…HCGSYGYTMA (336 aa)) enclose the HECT domain. C871 acts as the Glycyl thioester intermediate in catalysis.

It is found in the golgi apparatus. It localises to the golgi stack membrane. Its subcellular location is the cytoplasm. The protein localises to the endoplasmic reticulum. It carries out the reaction S-ubiquitinyl-[E2 ubiquitin-conjugating enzyme]-L-cysteine + [acceptor protein]-L-lysine = [E2 ubiquitin-conjugating enzyme]-L-cysteine + N(6)-ubiquitinyl-[acceptor protein]-L-lysine.. Its pathway is protein modification; protein ubiquitination. E3 ubiquitin-protein ligase involved in Golgi membrane fusion and regulation of small GTPases. Acts as a regulator of Golgi membrane dynamics during the cell cycle: recruited to Golgi membrane by Rab proteins and regulates postmitotic Golgi membrane fusion. Acts by mediating ubiquitination during mitotic Golgi disassembly, ubiquitination serving as a signal for Golgi reassembly later, after cell division. The polypeptide is E3 ubiquitin-protein ligase HACE1 (hace1) (Danio rerio (Zebrafish)).